We begin with the raw amino-acid sequence, 1271 residues long: Breakpoint cluster region protein (1271 aa).

N-acetylmethionine is present on M1. The tract at residues 1–426 (MVDPVGFAEA…DGEGAFHGDA (426 aa)) is kinase. Residues 28 to 55 (VGDIEQELERCKASIRRLEQEVNQERFR) adopt a coiled-coil conformation. Residues 67–173 (KKSYDRQRWG…GHGQPGADAE (107 aa)) form a disordered region. The segment covering 87–105 (ASEPRASASRPQPAPADGA) has biased composition (low complexity). Residue S122 is modified to Phosphoserine. Positions 123–138 (PGKARPGTARRPGAAA) are enriched in low complexity. Position 139 is a phosphoserine (S139). At Y177 the chain carries Phosphotyrosine; by HCK. Basic and acidic residues predominate over residues 185-198 (ERGLVKVNDKEVSD). Disordered stretches follow at residues 185–247 (ERGL…GDYE), 286–392 (GMME…HKRH), and 416–476 (NDGE…SRDA). The interval 197-385 (SDRISSLGSQ…QSFDSSSPPT (189 aa)) is binding to ABL SH2-domain. Positions 199–208 (RISSLGSQAM) are enriched in polar residues. Residues S202, S215, S222, and S236 each carry the phosphoserine modification. A Phosphotyrosine; by FES modification is found at Y246. Composition is skewed to low complexity over residues 346 to 356 (SSGQSSRVSPS) and 369 to 382 (SPSQ…DSSS). Phosphoserine is present on residues S356, S377, and S382. Phosphothreonine is present on T385. Over residues 441–451 (DRAEEQRRHQD) the composition is skewed to basic and acidic residues. Residues S459 and S463 each carry the phosphoserine modification. R471 carries the omega-N-methylarginine modification. Phosphoserine occurs at positions 473 and 488. In terms of domain architecture, DH spans 498-691 (MRKWVLSGIL…QNFLSSINEE (194 aa)). Y554 carries the post-translational modification Phosphotyrosine. T641 carries the phosphothreonine modification. Y644 carries the phosphotyrosine modification. Position 693 is a phosphothreonine (T693). A PH domain is found at 708–866 (QLLKDSFMVE…WRENIREQQK (159 aa)). Positions 893 to 1020 (HSIPLTINKE…QDRDWQRTVI (128 aa)) constitute a C2 domain. Position 894 is a phosphoserine (S894). The 195-residue stretch at 1054–1248 (VKIAVVTKRE…VMSQVQVLLY (195 aa)) folds into the Rho-GAP domain. S1264 is modified (phosphoserine).

As to quaternary structure, homotetramer. Interacts with PDZK1. May interact with CCPG1. Interacts with FES/FPS, ABL1, PIK3R1 and GRB2. Interacts with HCK. Interacts with SH2D5. Interacts with DLG4. Autophosphorylated. Phosphorylated by FES/FPS on tyrosine residues, leading to down-regulation of the BCR kinase activity. Phosphorylation at Tyr-177 by HCK is important for interaction with GRB2.

It localises to the postsynaptic density. Its subcellular location is the cell projection. The protein localises to the dendritic spine. The protein resides in the axon. It is found in the synapse. It carries out the reaction L-seryl-[protein] + ATP = O-phospho-L-seryl-[protein] + ADP + H(+). It catalyses the reaction L-threonyl-[protein] + ATP = O-phospho-L-threonyl-[protein] + ADP + H(+). Protein with a unique structure having two opposing regulatory activities toward small GTP-binding proteins. The C-terminus is a GTPase-activating protein (GAP) domain which stimulates GTP hydrolysis by RAC1, RAC2 and CDC42. Accelerates the intrinsic rate of GTP hydrolysis of RAC1 or CDC42, leading to down-regulation of the active GTP-bound form. The central Dbl homology (DH) domain functions as guanine nucleotide exchange factor (GEF) that modulates the GTPases CDC42, RHOA and RAC1. Promotes the conversion of CDC42, RHOA and RAC1 from the GDP-bound to the GTP-bound form. The amino terminus contains an intrinsic kinase activity. Functions as an important negative regulator of neuronal RAC1 activity. Regulates macrophage functions such as CSF1-directed motility and phagocytosis through the modulation of RAC1 activity. Plays a major role as a RHOA GEF in keratinocytes being involved in focal adhesion formation and keratinocyte differentiation. The sequence is that of Breakpoint cluster region protein from Homo sapiens (Human).